The chain runs to 211 residues: Protein-L-isoaspartate O-methyltransferase (211 aa).

Ser-59 is an active-site residue.

The protein belongs to the methyltransferase superfamily. L-isoaspartyl/D-aspartyl protein methyltransferase family.

It is found in the cytoplasm. It catalyses the reaction [protein]-L-isoaspartate + S-adenosyl-L-methionine = [protein]-L-isoaspartate alpha-methyl ester + S-adenosyl-L-homocysteine. In terms of biological role, catalyzes the methyl esterification of L-isoaspartyl residues in peptides and proteins that result from spontaneous decomposition of normal L-aspartyl and L-asparaginyl residues. It plays a role in the repair and/or degradation of damaged proteins. The protein is Protein-L-isoaspartate O-methyltransferase of Ignicoccus hospitalis (strain KIN4/I / DSM 18386 / JCM 14125).